The sequence spans 92 residues: Cytochrome c2 (92 aa).

Heme c-binding residues include Cys-12, Cys-15, His-16, and Met-66.

It belongs to the cytochrome c family. In terms of processing, binds 1 heme c group covalently per subunit.

In terms of biological role, cytochrome c2 is found mainly in purple, non-sulfur, photosynthetic bacteria where it functions as the electron donor to the oxidized bacteriochlorophyll in the photophosphorylation pathway. However, it may also have a role in the respiratory chain and is found in some non-photosynthetic bacteria. The sequence is that of Cytochrome c2 from Rhodocyclus tenuis (Rhodospirillum tenue).